A 68-amino-acid chain; its full sequence is Arabinogalactan peptide 1 (68 aa).

The N-terminal stretch at 1–30 is a signal peptide; it reads MAGQLKSKIVAVAVAAVVVVASSLVGTASA. Ser40 is lipidated: GPI-anchor amidated serine. The propeptide at 41–68 is removed in mature form; it reads GATATAAAAPAFAAVSVAAAALGGYLFC.

The protein belongs to the AG-peptide AGP family. In terms of processing, O-glycosylated on hydroxyprolines; noncontiguous hydroxylproline residues are glycosylated with arabinogalactan. In terms of tissue distribution, expressed in roots, stems, flowers and seeds.

It is found in the vacuole. It localises to the aleurone grain membrane. Its function is as follows. Proteoglycan that seems to be implicated in diverse developmental roles such as differentiation, cell-cell recognition, embryogenesis and programmed cell death. This chain is Arabinogalactan peptide 1 (AGPEP1), found in Oryza sativa subsp. japonica (Rice).